The chain runs to 432 residues: Alpha-2 adrenergic receptor (432 aa).

Residues 1–32 (MDPLNATGMDAFTAIHLNASWSADSGYSLAAI) lie on the Extracellular side of the membrane. Asn5 and Asn18 each carry an N-linked (GlcNAc...) asparagine glycan. The helical transmembrane segment at 33–57 (ASIAALVSFLILFTVVGNILVVIAV) threads the bilayer. Topologically, residues 58–69 (LTSRALKAPQNL) are cytoplasmic. Residues 70–95 (FLVSLATADILVATLVMPFSLANELM) traverse the membrane as a helical segment. Topologically, residues 96–105 (GYWYFGKVWC) are extracellular. Cys105 and Cys183 form a disulfide bridge. A helical transmembrane segment spans residues 106–128 (GIYLALDVLFCTSSIVHLCAISL). At 129–149 (DRYWSVTQAVEYNLKRTPKRV) the chain is on the cytoplasmic side. The chain crosses the membrane as a helical span at residues 150–172 (KCIIVIVWLISAFISSPPLLSID). Residues 173 to 188 (SNNYISSQPQCMLNDD) are Extracellular-facing. A helical transmembrane segment spans residues 189 to 212 (TWYILSSSMASFFAPCLIMILVYI). The Cytoplasmic portion of the chain corresponds to 213 to 356 (RIYQVAKTRT…QAREKRFTFV (144 aa)). The disordered stretch occupies residues 222 to 319 (TRSMSGKEPR…SISKQSARIS (98 aa)). Polar residues-rich tracts occupy residues 235–246 (VTQTENGLNKAN) and 265–275 (SQRTVTIGQQT). Positions 288-300 (GKGHKPQRQDSQR) are enriched in basic and acidic residues. Over residues 309-319 (SSISKQSARIS) the composition is skewed to polar residues. The helical transmembrane segment at 357 to 380 (LAVVMGVFVVCWFPFFFSYSLHAV) threads the bilayer. The Extracellular segment spans residues 381 to 393 (CRDYCKIPDTLFK). The chain crosses the membrane as a helical span at residues 394–413 (FFWIGYCNSSLNPAIYTIFN). Residues 414–432 (RDFRRAFQKILCKSWKKSF) lie on the Cytoplasmic side of the membrane.

It belongs to the G-protein coupled receptor 1 family.

The protein resides in the cell membrane. Functionally, alpha-2 adrenergic receptors mediate the catecholamine-induced inhibition of adenylate cyclase through the action of G proteins. The protein is Alpha-2 adrenergic receptor of Labrus ossifagus (Cuckoo wrasse).